The chain runs to 130 residues: Blasticidin-S deaminase (130 aa).

Residues 1–129 (MPLSQEESTL…ELLPSGYVWE (129 aa)) form the CMP/dCMP-type deaminase domain. S28 contacts substrate. C54 lines the Zn(2+) pocket. The active-site Proton donor is the E56. R82 serves as a coordination point for substrate. Zn(2+) contacts are provided by C88 and C91. Substrate is bound by residues Y126 and W128.

It belongs to the cytidine and deoxycytidylate deaminase family. Homotetramer. The cofactor is Zn(2+).

The enzyme catalyses blasticidin S + H2O + H(+) = deaminohydroxyblasticidin S + NH4(+). Its function is as follows. Catalyzes the deamination of the cytosine moiety of the antibiotics blasticidin S, cytomycin and acetylblasticidin S. The protein is Blasticidin-S deaminase (bsd) of Aspergillus terreus.